Here is a 199-residue protein sequence, read N- to C-terminus: Small ribosomal subunit protein uS4 (199 aa).

Residues 91–153 enclose the S4 RNA-binding domain; sequence ARLDNVVYRM…SKNFVVIKEA (63 aa).

It belongs to the universal ribosomal protein uS4 family. In terms of assembly, part of the 30S ribosomal subunit. Contacts protein S5. The interaction surface between S4 and S5 is involved in control of translational fidelity.

Functionally, one of the primary rRNA binding proteins, it binds directly to 16S rRNA where it nucleates assembly of the body of the 30S subunit. In terms of biological role, with S5 and S12 plays an important role in translational accuracy. This chain is Small ribosomal subunit protein uS4, found in Exiguobacterium sibiricum (strain DSM 17290 / CCUG 55495 / CIP 109462 / JCM 13490 / 255-15).